Here is a 568-residue protein sequence, read N- to C-terminus: MSKISRRAYADMYGPTVGDKVRLADTALWIQVEKDFTIYGEEVKFGGGKVIRDGMGQSQATSDKTPDTVITNALILDHWGIVKADVAIKNGRISAIGKAGNPDIQPGVTIIVGPCTEVIAGEGQILTAGAIDSHIHFICPQQIDEALMSGTTTMIGGGTGPATGTNATTCTPGKWHIGKMLQAGESFAMNLGFLGKGNASLPGGLNEQLEAGALGLKLHEDWGTTPASIDNCLTVAENYDVQVAIHTDTLNESGFVEDTLAAFKGRTIHTYHTEGAGGGHAPDIIKACGSSNVLPSSTNPTRPYTVNTVDEHLDMLMVCHHLDPNIPEDVAFADSRIRKETIAAEDILHDLGAFSMIASDSQAMGRVGEVICRTWQTAHKMKVQRGLLPEDEGTGADNFRAKRYIAKYTINPALAHGVAHEVGSIEVGKLADIILWKPAFFGVKPSLIIKGGAIAAAPMGDPNASIPTPQPVHYRKMFGAYGQACKQTSVSFVSQAAIDASISDYFQLERRLVAVKNCRSVTKADMVHNAYQPHMEVDPETYEVRADGQLLTCEPAEELPMAQRYFLF.

The 440-residue stretch at 129–568 folds into the Urease domain; the sequence is GAIDSHIHFI…LPMAQRYFLF (440 aa). Ni(2+) contacts are provided by His-134, His-136, and Lys-217. Lys-217 bears the N6-carboxylysine mark. Residue His-219 coordinates substrate. His-246 and His-272 together coordinate Ni(2+). Catalysis depends on His-320, which acts as the Proton donor. Asp-360 lines the Ni(2+) pocket.

Belongs to the metallo-dependent hydrolases superfamily. Urease alpha subunit family. Heterotrimer of UreA (gamma), UreB (beta) and UreC (alpha) subunits. Three heterotrimers associate to form the active enzyme. The cofactor is Ni cation. Post-translationally, carboxylation allows a single lysine to coordinate two nickel ions.

It is found in the cytoplasm. It carries out the reaction urea + 2 H2O + H(+) = hydrogencarbonate + 2 NH4(+). The protein operates within nitrogen metabolism; urea degradation; CO(2) and NH(3) from urea (urease route): step 1/1. The polypeptide is Urease subunit alpha (Saccharophagus degradans (strain 2-40 / ATCC 43961 / DSM 17024)).